A 262-amino-acid chain; its full sequence is Glutamate racemase (262 aa).

Substrate is bound by residues 5-6 (DS) and 37-38 (YG). Cys69 (proton donor/acceptor) is an active-site residue. Residue 70 to 71 (NT) coordinates substrate. Cys181 serves as the catalytic Proton donor/acceptor. 182 to 183 (TH) contributes to the substrate binding site.

This sequence belongs to the aspartate/glutamate racemases family.

The catalysed reaction is L-glutamate = D-glutamate. The protein operates within cell wall biogenesis; peptidoglycan biosynthesis. In terms of biological role, provides the (R)-glutamate required for cell wall biosynthesis. The sequence is that of Glutamate racemase from Buchnera aphidicola subsp. Acyrthosiphon pisum (strain APS) (Acyrthosiphon pisum symbiotic bacterium).